The sequence spans 717 residues: Patatin-like phospholipase domain-containing protein AO090003000839 (717 aa).

Residues 87–107 (WPFLFIVFGWITVLGFAYALT) traverse the membrane as a helical segment. Residues 277 to 468 (LCLSGGATFA…RTDIPIRALN (192 aa)) form the PNPLA domain. The GXSXG signature appears at 308-312 (GTSGG). Serine 310 functions as the Nucleophile in the catalytic mechanism. Aspartate 455 serves as the catalytic Proton acceptor. The disordered stretch occupies residues 620–696 (VSPAQSRRKR…STGNIFQEMR (77 aa)). Over residues 639–658 (MVERLDHNLPDRQPDNKEDL) the composition is skewed to basic and acidic residues. Positions 660–673 (DSSGIDSNVSSRDS) are enriched in low complexity.

It belongs to the PLPL family.

Its subcellular location is the membrane. Its function is as follows. Probable lipid hydrolase. This is Patatin-like phospholipase domain-containing protein AO090003000839 from Aspergillus oryzae (strain ATCC 42149 / RIB 40) (Yellow koji mold).